The chain runs to 440 residues: Polycomb group protein VERNALIZATION 2 (440 aa).

The segment at 86–111 (EDCSCPFCSMLCGSFKGLQFHLNSSH) adopts a C2H2-type zinc-finger fold. The Nuclear localization signal motif lies at 156–163 (KPRKRRQR). Residues 267–345 (RQFYHSHRVQ…GHISWACEVF (79 aa)) are VEFS-box. A disordered region spans residues 398-440 (NNNNNSVDHPSDSNTNNNNIVDHPNDIKNKNNVDNKDNNSRDK). The span at 420-440 (HPNDIKNKNNVDNKDNNSRDK) shows a compositional bias: basic and acidic residues.

It belongs to the VEFS (VRN2-EMF2-FIS2-SU(Z)12) family. In terms of assembly, probable component of a PcG complex. In plants, PcG complexes are probably composed of a member of the EZ family (CLF or MEA), FIE, and a member of the VEFS family (FIS2, VRN2 or EMF2). Component of the plant homeodomain / polycomb repressive complex 2 (PHD-PRC2) large complex during prolonged cold, composed of core PRC2 components (VRN2, EZA1, FIE and MSI1), and three related PHD finger proteins (VIL1, VIL2 and VIN3) that mediates histone H3 trimethylation on 'Lys-27' (H3K27me3). Binds to ALP1. In terms of tissue distribution, weakly expressed. Expressed both during, and in the absence of vernalization.

The protein resides in the nucleus. Its function is as follows. Polycomb group (PcG) protein. Plays a central role in vernalization by maintaining repressed the homeotic gene FLC, a floral repressor, after a cold treatment. PcG proteins act by forming multiprotein complexes, which are required to maintain the transcriptionally repressive state of homeotic genes throughout development. PcG proteins are not required to initiate repression, but to maintain it during later stages of development. They probably act via the methylation of histones, rendering chromatin heritably changed in its expressibility. Associates constitutively along the whole FLC locus. This is Polycomb group protein VERNALIZATION 2 (VRN2) from Arabidopsis thaliana (Mouse-ear cress).